The primary structure comprises 469 residues: MITEGAQAPRLLLPPLLLLLTLPATGSDPVLCFTQYEESSGKCKGLLGGGVSVEDCCLNTAFAYQKRSGGLCQPCRSPRWSLWSTWAPCSVTCSEGSQLRYRRCVGWNGQCSGKVAPGTLEWQLQACEDQQCCPEMGGWSGWGPWEPCSVTCSKGTRTRRRACNHPAPKCGGHCPGQAQESEACDTQQVCPTHGAWATWGPWTPCSASCHGGPHEPKETRSRKCSAPEPSQKPPGKPCPGLAYEQRRCTGLPPCPVAGGWGPWGPVSPCPVTCGLGQTMEQRTCNHPVPQHGGPFCAGDATRTHICNTAVPCPVDGEWDSWGEWSPCIRRNMKSISCQEIPGQQSRGRTCRGRKFDGHRCAGQQQDIRHCYSIQHCPLKGSWSEWSTWGLCMPPCGPNPTRARQRLCTPLLPKYPPTVSMVEGQGEKNVTFWGRPLPRCEELQGQKLVVEEKRPCLHVPACKDPEEEEL.

A signal peptide spans 1–27 (MITEGAQAPRLLLPPLLLLLTLPATGS). 7 consecutive TSP type-1 domains span residues 28-76 (DPVL…QPCR), 77-134 (SPRW…QCCP), 136-191 (MGGW…QVCP), 193-255 (HGAW…PPCP), 257-313 (AGGW…VPCP), 315-377 (DGEW…QHCP), and 379-462 (KGSW…PACK). Disulfide bonds link Cys-32–Cys-56, Cys-43–Cys-72, and Cys-57–Cys-75. 2 C-linked (Man) tryptophan glycosylation sites follow: Trp-83 and Trp-86. Disulfide bonds link Cys-89-Cys-127, Cys-93-Cys-133, Cys-104-Cys-111, Cys-132-Cys-170, Cys-148-Cys-184, Cys-152-Cys-190, and Cys-163-Cys-174. O-linked (Fuc...) threonine glycosylation is present at Thr-92. C-linked (Man) tryptophan glycosylation is found at Trp-139, Trp-142, and Trp-145. Thr-151 carries an O-linked (Fuc...) threonine glycan. Trp-196, Trp-199, and Trp-202 each carry a C-linked (Man) tryptophan glycan. Intrachain disulfides connect Cys-205–Cys-248, Cys-209–Cys-254, and Cys-224–Cys-238. Ser-208 is a glycosylation site (O-linked (Fuc...) serine). The interval 219-238 (TRSRKCSAPEPSQKPPGKPC) is disordered. Trp-260 and Trp-263 each carry a C-linked (Man) tryptophan glycan. Intrachain disulfides connect Cys-269/Cys-306, Cys-273/Cys-312, and Cys-284/Cys-296. Thr-272 carries an O-linked (Fuc...) threonine glycan. Trp-321 and Trp-324 each carry a C-linked (Man) tryptophan glycan. Cystine bridges form between Cys-327–Cys-370, Cys-337–Cys-376, and Cys-350–Cys-360. Residues 351–359 (RGRKFDGHR) form an interaction with Complement C3 beta chain region. Trp-382, Trp-385, and Trp-388 each carry a C-linked (Man) tryptophan glycan. 3 cysteine pairs are disulfide-bonded: Cys-391/Cys-455, Cys-395/Cys-461, and Cys-407/Cys-439. The N-linked (GlcNAc...) (complex) asparagine glycan is linked to Asn-428.

In terms of assembly, in plasma, properdin exists as dimers, trimers or tetramers in the relative proportions of 26:54:20. Interacts with the pro-C3-convertase enzyme complex (C3b-Bb) comprised of Complement C3 beta chain (C3b) and the Complement factor B Bb fragment (Bb), where it binds (via its TSP type-1 5 domain) with C3b and Bb. This interaction stabilizes the complex and allows it to become the active C3-convertase enzyme complex (C3b-Bb-FP). Interacts with C3b. Interacts with CFB.

The protein resides in the secreted. Its function is as follows. A positive regulator of the alternate pathway (AP) of complement. It binds to and stabilizes the C3- and C5-convertase enzyme complexes. Inhibits CFI-CFH mediated degradation of Complement C3 beta chain (C3b). This is Properdin from Homo sapiens (Human).